We begin with the raw amino-acid sequence, 185 residues long: Dirigent protein 12 (185 aa).

An N-terminal signal peptide occupies residues 1 to 25; the sequence is MTNQIYKQVFSFFLSVLLLQSSTVS. A disulfide bond links Cys-37 and Cys-184. N-linked (GlcNAc...) asparagine glycosylation is found at Asn-56 and Asn-120.

It belongs to the plant dirigent protein family. As to quaternary structure, homodimer. As to expression, seed coat specific expression.

Its subcellular location is the secreted. It is found in the extracellular space. The protein resides in the apoplast. In terms of biological role, dirigent proteins impart stereoselectivity on the phenoxy radical-coupling reaction, yielding optically active lignans from two molecules of coniferyl alcohol in the biosynthesis of lignans, flavonolignans, and alkaloids and thus plays a central role in plant secondary metabolism. Required for seed accumulation of neolignans. The protein is Dirigent protein 12 (DIR12) of Arabidopsis thaliana (Mouse-ear cress).